Reading from the N-terminus, the 177-residue chain is Antigen TpF1 (177 aa).

It belongs to the Dps family. In terms of assembly, homodecamer; either linked or stabilized by disulfide bonds.

May play an important structural role in the outer membrane. The sequence is that of Antigen TpF1 (tpf1) from Treponema pallidum (strain Nichols).